A 264-amino-acid polypeptide reads, in one-letter code: MKPTTIASLQKCKQDKKRFATITAYDYSFAKLFAEEGLNVMLVGDSLGMTVQGHDSTLPVTVADIAYHTAAVRRGAPNCLLLADLPFMAYATPEQAFENAATVMRAGANMVKIEGGEWLVETVQMLTERAVPVCGHLGLTPQSVNIFGGYKVQGRGDEAGDQLLSDALALEAAGAQLLVLECVPVELAKRITEALAIPVIGIGAGNVTDGQILVMHDAFGITGGHIPKFAKNFLAETGDIRAAVRQYMAEVESGVYPGEEHSFH.

Residues aspartate 45 and aspartate 84 each contribute to the Mg(2+) site. 3-methyl-2-oxobutanoate contacts are provided by residues 45-46 (DS), aspartate 84, and lysine 112. Residue glutamate 114 participates in Mg(2+) binding. Glutamate 181 serves as the catalytic Proton acceptor.

This sequence belongs to the PanB family. Homodecamer; pentamer of dimers. The cofactor is Mg(2+).

The protein resides in the cytoplasm. The enzyme catalyses 3-methyl-2-oxobutanoate + (6R)-5,10-methylene-5,6,7,8-tetrahydrofolate + H2O = 2-dehydropantoate + (6S)-5,6,7,8-tetrahydrofolate. The protein operates within cofactor biosynthesis; (R)-pantothenate biosynthesis; (R)-pantoate from 3-methyl-2-oxobutanoate: step 1/2. Functionally, catalyzes the reversible reaction in which hydroxymethyl group from 5,10-methylenetetrahydrofolate is transferred onto alpha-ketoisovalerate to form ketopantoate. This chain is 3-methyl-2-oxobutanoate hydroxymethyltransferase, found in Escherichia coli O7:K1 (strain IAI39 / ExPEC).